The chain runs to 426 residues: Glutamate-1-semialdehyde 2,1-aminomutase (426 aa).

N6-(pyridoxal phosphate)lysine is present on K263.

Belongs to the class-III pyridoxal-phosphate-dependent aminotransferase family. HemL subfamily. Homodimer. It depends on pyridoxal 5'-phosphate as a cofactor.

Its subcellular location is the cytoplasm. The enzyme catalyses (S)-4-amino-5-oxopentanoate = 5-aminolevulinate. The protein operates within porphyrin-containing compound metabolism; protoporphyrin-IX biosynthesis; 5-aminolevulinate from L-glutamyl-tRNA(Glu): step 2/2. This chain is Glutamate-1-semialdehyde 2,1-aminomutase, found in Caldicellulosiruptor bescii (strain ATCC BAA-1888 / DSM 6725 / KCTC 15123 / Z-1320) (Anaerocellum thermophilum).